The following is a 310-amino-acid chain: Thioredoxin reductase (310 aa).

Residue 35–42 (ERGMPGGQ) participates in FAD binding. Cysteine 134 and cysteine 137 are joined by a disulfide. An FAD-binding site is contributed by 277–286 (DVRDKGLRQI).

This sequence belongs to the class-II pyridine nucleotide-disulfide oxidoreductase family. As to quaternary structure, homodimer. FAD is required as a cofactor.

It is found in the cytoplasm. The catalysed reaction is [thioredoxin]-dithiol + NADP(+) = [thioredoxin]-disulfide + NADPH + H(+). This Staphylococcus epidermidis (strain ATCC 35984 / DSM 28319 / BCRC 17069 / CCUG 31568 / BM 3577 / RP62A) protein is Thioredoxin reductase (trxB).